The sequence spans 145 residues: Probable DNA-directed RNA polymerases I and III subunit RPAC2 (145 aa).

Positions 1 to 52 (MGKKSEKKVVEETMEVDEQPAVEPEAVPEEEPEVEDEDLNVPKKKKMEILDP) are disordered. Over residues 12–39 (ETMEVDEQPAVEPEAVPEEEPEVEDEDL) the composition is skewed to acidic residues.

Belongs to the archaeal Rpo11/eukaryotic RPB11/RPC19 RNA polymerase subunit family. Component of the RNA polymerase I (Pol I) and RNA polymerase III (Pol III) complexes consisting of at least 13 and 17 subunits, respectively.

It is found in the nucleus. DNA-dependent RNA polymerase catalyzes the transcription of DNA into RNA using the four ribonucleoside triphosphates as substrates. Common core component of RNA polymerases I and III which synthesize ribosomal RNA precursors and small RNAs, such as 5S rRNA and tRNAs, respectively. In Caenorhabditis briggsae, this protein is Probable DNA-directed RNA polymerases I and III subunit RPAC2 (rpac-19).